Here is a 427-residue protein sequence, read N- to C-terminus: Flotillin-1 (427 aa).

Ser19, Ser163, and Ser385 each carry phosphoserine.

It belongs to the band 7/mec-2 family. Flotillin subfamily. Heterooligomeric complex of flotillin-1 and flotillin-2 and caveolin-1 and caveolin-2. Interacts with ECPAS.

The protein localises to the cell membrane. It localises to the endosome. Its subcellular location is the membrane. The protein resides in the caveola. It is found in the melanosome. The protein localises to the membrane raft. May act as a scaffolding protein within caveolar membranes, functionally participating in formation of caveolae or caveolae-like vesicles. The protein is Flotillin-1 (FLOT1) of Bos taurus (Bovine).